We begin with the raw amino-acid sequence, 113 residues long: UPF0122 protein LCA_0713 (113 aa).

Belongs to the UPF0122 family.

Might take part in the signal recognition particle (SRP) pathway. This is inferred from the conservation of its genetic proximity to ftsY/ffh. May be a regulatory protein. The protein is UPF0122 protein LCA_0713 of Latilactobacillus sakei subsp. sakei (strain 23K) (Lactobacillus sakei subsp. sakei).